The primary structure comprises 393 residues: Staphopain B (393 aa).

An N-terminal signal peptide occupies residues 1-36; that stretch reads MNSSCKSRVFNIISIIMVSMLILSLGAFANNNKAKA. The propeptide occupies 37–219; the sequence is DSHSKQLEIN…KVEENEAIQE (183 aa). Residues Cys243, His340, and Asn360 contribute to the active site.

This sequence belongs to the peptidase C47 family. In terms of assembly, in the cytoplasm, prematurely activated/folded SspB forms a stable non-covalent complex with SspC. In terms of processing, proteolytically cleaved by staphylococcal serine protease (SspA).

The protein resides in the secreted. Prematurely activated/folded staphopain B is inhibited by staphostatin B (SspC), which is probably required to protect staphylococcal cytoplasmic proteins from degradation by SspB. Also inactivated by E-64 and stimulated by EDTA. In terms of biological role, cysteine protease that plays an important role in the inhibition of host innate immune response. Degrades host elastin, fibrogen, fibronectin and kininogen. Blocks phagocytosis of opsonised S.aureus by neutrophils and monocytes by inducing their death in a proteolytic activity-dependent manner. Decreases surface expression of the 'don't eat me' signal CD31 on neutrophils. Cleaves host galectin-3/LGALS3, thereby inhibiting the neutrophil-activating ability of the lectin. This chain is Staphopain B (sspB), found in Staphylococcus aureus (strain NCTC 8325 / PS 47).